The primary structure comprises 181 residues: ATP synthase subunit b (181 aa).

Residues Leu-24–Val-44 traverse the membrane as a helical segment.

It belongs to the ATPase B chain family. As to quaternary structure, F-type ATPases have 2 components, F(1) - the catalytic core - and F(0) - the membrane proton channel. F(1) has five subunits: alpha(3), beta(3), gamma(1), delta(1), epsilon(1). F(0) has three main subunits: a(1), b(2) and c(10-14). The alpha and beta chains form an alternating ring which encloses part of the gamma chain. F(1) is attached to F(0) by a central stalk formed by the gamma and epsilon chains, while a peripheral stalk is formed by the delta and b chains.

The protein resides in the cell membrane. Its function is as follows. F(1)F(0) ATP synthase produces ATP from ADP in the presence of a proton or sodium gradient. F-type ATPases consist of two structural domains, F(1) containing the extramembraneous catalytic core and F(0) containing the membrane proton channel, linked together by a central stalk and a peripheral stalk. During catalysis, ATP synthesis in the catalytic domain of F(1) is coupled via a rotary mechanism of the central stalk subunits to proton translocation. Functionally, component of the F(0) channel, it forms part of the peripheral stalk, linking F(1) to F(0). The chain is ATP synthase subunit b from Mycoplasma mycoides subsp. mycoides SC (strain CCUG 32753 / NCTC 10114 / PG1).